The primary structure comprises 238 residues: Small ribosomal subunit protein uS2 (238 aa).

The protein belongs to the universal ribosomal protein uS2 family.

The sequence is that of Small ribosomal subunit protein uS2 from Synechococcus sp. (strain CC9311).